The following is a 284-amino-acid chain: RNase adapter protein RapZ (284 aa).

8-15 provides a ligand contact to ATP; sequence GRSGSGKS. 56 to 59 contacts GTP; the sequence is DVRN. The tract at residues 266–284 is RNA-binding; it reads RSRGKNVQSRHRTLEKRKP.

The protein belongs to the RapZ-like family. RapZ subfamily. Homotrimer.

In terms of biological role, modulates the synthesis of GlmS, by affecting the processing and stability of the regulatory small RNA GlmZ. When glucosamine-6-phosphate (GlcN6P) concentrations are high in the cell, RapZ binds GlmZ and targets it to cleavage by RNase E. Consequently, GlmZ is inactivated and unable to activate GlmS synthesis. Under low GlcN6P concentrations, RapZ is sequestered and inactivated by an other regulatory small RNA, GlmY, preventing GlmZ degradation and leading to synthesis of GlmS. This chain is RNase adapter protein RapZ, found in Shigella dysenteriae serotype 1 (strain Sd197).